Here is a 64-residue protein sequence, read N- to C-terminus: Temporin-ALf (64 aa).

An N-terminal signal peptide occupies residues 1-22; that stretch reads MFTLKKSLLLLFFLGTINLSLC. The propeptide occupies 23–46; that stretch reads EQERNAEEERRDEPDERNAEVEKR. At L62 the chain carries Leucine amide.

In terms of tissue distribution, expressed by the skin glands.

The protein localises to the secreted. Its function is as follows. Antimicrobial peptide with activity against Gram-positive and Gram-negative bacteria and against fungi. Has been tested against S.aureus (MIC=2.5 ug/mL), B.pumilus (MIC=5.0 ug/mL), B.cereus (MIC=30.0 ug/mL), E.coli (MIC=2.5 ug/mL), B.dysenteriae (MIC=5.0 ug/mL), A.cacoaceticus (MIC=30.0 ug/mL), P.aeruginosa (MIC=5.0 ug/mL) and C.albicans (MIC=2.5 ug/mL). Also shows a weak hemolytic activity. The sequence is that of Temporin-ALf from Amolops loloensis (Lolokou Sucker Frog).